The sequence spans 158 residues: MKILVIQGPNLNILGHREPHIYGNFTLDQIHNNLQAQAKQNNAELEFFQSNFEGEIIDKLQECIGGEYAGVLINPAAFSHTSIAIADAIASCGVPVIEVHISNIHAREEYRSKSYTGAVSAGVITGFGAFGYHLALMGILQIANEIAALKAQQNNQNA.

Residue Tyr-22 is the Proton acceptor of the active site. Substrate-binding residues include Asn-74, His-80, and Asp-87. The active-site Proton donor is His-100. Substrate is bound by residues 101–102 (IS) and Arg-111.

It belongs to the type-II 3-dehydroquinase family. Homododecamer.

The enzyme catalyses 3-dehydroquinate = 3-dehydroshikimate + H2O. It participates in metabolic intermediate biosynthesis; chorismate biosynthesis; chorismate from D-erythrose 4-phosphate and phosphoenolpyruvate: step 3/7. Catalyzes a trans-dehydration via an enolate intermediate. This is 3-dehydroquinate dehydratase from Helicobacter hepaticus (strain ATCC 51449 / 3B1).